Consider the following 455-residue polypeptide: C4-dicarboxylate transport protein (455 aa).

Transmembrane regions (helical) follow at residues histidine 20 to proline 40, methionine 59 to leucine 79, glycine 91 to isoleucine 111, glycine 160 to glycine 180, proline 209 to valine 229, leucine 231 to glycine 251, leucine 344 to isoleucine 364, and alanine 367 to valine 387.

This sequence belongs to the dicarboxylate/amino acid:cation symporter (DAACS) (TC 2.A.23) family.

The protein localises to the cell inner membrane. Responsible for the transport of dicarboxylates such as succinate, fumarate, and malate from the periplasm across the membrane. In Paracoccus denitrificans (strain Pd 1222), this protein is C4-dicarboxylate transport protein.